Consider the following 123-residue polypeptide: Putative acidic leucine-rich nuclear phosphoprotein 32 family member C (123 aa).

LRR repeat units follow at residues 43 to 64, 65 to 87, 89 to 110, and 114 to 123; these read ELEF…PKLN, KLKK…AEKC, NLKH…ELLK, and NLKSLDLFNC.

It belongs to the ANP32 family.

This is Putative acidic leucine-rich nuclear phosphoprotein 32 family member C (Anp32c) from Mus musculus (Mouse).